The sequence spans 511 residues: Xylose import ATP-binding protein XylG (511 aa).

2 ABC transporter domains span residues 6–244 (LEMR…VGRE) and 261–506 (FEAR…IGKP). 38 to 45 (GENGAGKS) serves as a coordination point for ATP.

This sequence belongs to the ABC transporter superfamily. Xylose importer (TC 3.A.1.2.4) family. In terms of assembly, the complex is composed of two ATP-binding proteins (XylG), two transmembrane proteins (XylH) and a solute-binding protein (XylF).

It localises to the cell inner membrane. It carries out the reaction D-xylose(out) + ATP + H2O = D-xylose(in) + ADP + phosphate + H(+). Its function is as follows. Part of the ABC transporter complex XylFGH involved in xylose import. Responsible for energy coupling to the transport system. The protein is Xylose import ATP-binding protein XylG of Brucella abortus (strain 2308).